Here is a 233-residue protein sequence, read N- to C-terminus: tRNA1(Val) (adenine(37)-N6)-methyltransferase (233 aa).

The protein belongs to the methyltransferase superfamily. tRNA (adenine-N(6)-)-methyltransferase family.

It is found in the cytoplasm. It carries out the reaction adenosine(37) in tRNA1(Val) + S-adenosyl-L-methionine = N(6)-methyladenosine(37) in tRNA1(Val) + S-adenosyl-L-homocysteine + H(+). Its function is as follows. Specifically methylates the adenine in position 37 of tRNA(1)(Val) (anticodon cmo5UAC). The polypeptide is tRNA1(Val) (adenine(37)-N6)-methyltransferase (Shewanella amazonensis (strain ATCC BAA-1098 / SB2B)).